We begin with the raw amino-acid sequence, 319 residues long: MKRIAILTSGGDAPGMNAATRAVVRKAIYEGLEVYGINYGFLGLVNGDIRKLELGSVGDLLHRGGTFLYSARYPEFATEEGQLKGIEQLKKHQIDGLVVIGGDGSYHGAEALTKRGFPTIGIPGTIDNDISGTDFTIGFDTALNTVLDALDKIRDTATSHERTFIIEVMGRDAGDIALWSGLAGGAEAIIVPEESFNMDDVVDRLNKGRERGKKHSIIVVAEGVMSGNEFAKQLAEYGDYHARVTVLGHVQRGGSPTAFDRVLASRLGARSVELLLENRGGLAVGIRENRIVENNIGEILKEKHTLDQKLFDLASILSI.

G11 is an ATP binding site. 21-25 (RAVVR) is an ADP binding site. ATP-binding positions include 72–73 (RY) and 102–105 (GDGS). D103 provides a ligand contact to Mg(2+). 125–127 (TID) lines the substrate pocket. D127 acts as the Proton acceptor in catalysis. Residue R154 participates in ADP binding. Substrate-binding positions include R162 and 169 to 171 (MGR). ADP-binding positions include 185 to 187 (GAE), R211, and 213 to 215 (KKH). Residues E222, R243, and 249–252 (HVQR) each bind substrate.

This sequence belongs to the phosphofructokinase type A (PFKA) family. ATP-dependent PFK group I subfamily. Prokaryotic clade 'B1' sub-subfamily. As to quaternary structure, homotetramer. Mg(2+) is required as a cofactor.

The protein resides in the cytoplasm. The enzyme catalyses beta-D-fructose 6-phosphate + ATP = beta-D-fructose 1,6-bisphosphate + ADP + H(+). The protein operates within carbohydrate degradation; glycolysis; D-glyceraldehyde 3-phosphate and glycerone phosphate from D-glucose: step 3/4. Its activity is regulated as follows. Allosterically activated by ADP and other diphosphonucleosides, and allosterically inhibited by phosphoenolpyruvate. Functionally, catalyzes the phosphorylation of D-fructose 6-phosphate to fructose 1,6-bisphosphate by ATP, the first committing step of glycolysis. This chain is ATP-dependent 6-phosphofructokinase, found in Listeria innocua serovar 6a (strain ATCC BAA-680 / CLIP 11262).